We begin with the raw amino-acid sequence, 425 residues long: Histone-binding protein RBBP4 (425 aa).

Alanine 2 carries the post-translational modification N-acetylalanine. WD repeat units follow at residues 32–125 (YDLV…NHEG), 126–175 (EVNR…RLRG), 176–223 (HQKE…KTIF), 225–270 (GHTA…HSVD), 271–314 (AHTA…HSFE), 315–371 (SHKD…FIHG), and 372–404 (GHTA…VWQM).

It belongs to the WD repeat RBAP46/RBAP48/MSI1 family. Binds directly to histone H4, probably via helix 1 of the histone fold, a region that is not accessible when histone H4 is in chromatin. Forms a large corepressor complex that contains ncor1, sin3a and possibly sin3b, histone deacetylases hdac2, hdac1, rbbp4 and possibly rbbp7.

It localises to the nucleus. The protein localises to the chromosome. It is found in the telomere. In terms of biological role, core histone-binding subunit that may target chromatin assembly factors, chromatin remodeling factors and histone deacetylases to their histone substrates in a manner that is regulated by nucleosomal DNA. Component of several complexes which regulate chromatin metabolism. The chain is Histone-binding protein RBBP4 (rbbp4) from Xenopus tropicalis (Western clawed frog).